The sequence spans 500 residues: Trehalose-6-phosphate synthase (500 aa).

Residue Arg-28 coordinates D-glucose 6-phosphate. UDP-alpha-D-glucose is bound at residue 48–49 (GG). Positions 104 and 158 each coordinate D-glucose 6-phosphate. Arg-300 and Lys-305 together coordinate UDP-alpha-D-glucose. Arg-338 is a D-glucose 6-phosphate binding site. A UDP-alpha-D-glucose-binding site is contributed by 403-407 (LVAKE).

This sequence belongs to the glycosyltransferase 20 family. Homotetramer.

It catalyses the reaction ADP-alpha-D-glucose + D-glucose 6-phosphate = alpha,alpha-trehalose 6-phosphate + ADP + H(+). The catalysed reaction is CDP-alpha-D-glucose + D-glucose 6-phosphate = alpha,alpha-trehalose 6-phosphate + CDP + H(+). The enzyme catalyses GDP-alpha-D-glucose + D-glucose 6-phosphate = alpha,alpha-trehalose 6-phosphate + GDP + H(+). It carries out the reaction TDP-alpha-D-glucose + D-glucose 6-phosphate = 5-methyl-UDP + alpha,alpha-trehalose 6-phosphate + H(+). It catalyses the reaction D-glucose 6-phosphate + UDP-alpha-D-glucose = alpha,alpha-trehalose 6-phosphate + UDP + H(+). It participates in glycan biosynthesis; trehalose biosynthesis. Its function is as follows. Probably involved in the osmoprotection via the biosynthesis of trehalose and in the production of glycogen and alpha-glucan via the TreS-Pep2 branch involved in the biosynthesis of maltose-1-phosphate (M1P). Catalyzes the transfer of glucose from UDP-glucose (UDP-Glc) to D-glucose 6-phosphate (Glc-6-P) to form trehalose-6-phosphate. Probably also able to use ADP-Glc, CDP-Glc, GDP-Glc and TDP-Glc as glucosyl donors. The protein is Trehalose-6-phosphate synthase of Mycobacterium marinum (strain ATCC BAA-535 / M).